Reading from the N-terminus, the 556-residue chain is ATP synthase subunit beta-1, mitochondrial (556 aa).

The segment covering M1–A20 has biased composition (low complexity). The disordered stretch occupies residues M1 to H37. The transit peptide at M1–Y51 directs the protein to the mitochondrion. A Phosphoserine modification is found at S59. G231–T238 lines the ATP pocket.

Belongs to the ATPase alpha/beta chains family. As to quaternary structure, F-type ATPases have 2 components, CF(1) - the catalytic core - and CF(0) - the membrane proton channel. CF(1) has five subunits: alpha(3), beta(3), gamma(1), delta(1), epsilon(1). CF(0) has three main subunits: a, b and c.

It is found in the mitochondrion. The protein localises to the mitochondrion inner membrane. It carries out the reaction ATP + H2O + 4 H(+)(in) = ADP + phosphate + 5 H(+)(out). Mitochondrial membrane ATP synthase (F(1)F(0) ATP synthase or Complex V) produces ATP from ADP in the presence of a proton gradient across the membrane which is generated by electron transport complexes of the respiratory chain. F-type ATPases consist of two structural domains, F(1) - containing the extramembraneous catalytic core, and F(0) - containing the membrane proton channel, linked together by a central stalk and a peripheral stalk. During catalysis, ATP synthesis in the catalytic domain of F(1) is coupled via a rotary mechanism of the central stalk subunits to proton translocation. Subunits alpha and beta form the catalytic core in F(1). Rotation of the central stalk against the surrounding alpha(3)beta(3) subunits leads to hydrolysis of ATP in three separate catalytic sites on the beta subunits. This chain is ATP synthase subunit beta-1, mitochondrial, found in Arabidopsis thaliana (Mouse-ear cress).